Reading from the N-terminus, the 55-residue chain is Large ribosomal subunit protein bL33 (55 aa).

This sequence belongs to the bacterial ribosomal protein bL33 family.

This chain is Large ribosomal subunit protein bL33, found in Rhodopseudomonas palustris (strain BisA53).